The sequence spans 1247 residues: Respiratory nitrate reductase 1 alpha chain (1247 aa).

One can recognise a 4Fe-4S Mo/W bis-MGD-type domain in the interval 43–107 (DKIVRSTHGV…SYSWYLYSAN (65 aa)). [4Fe-4S] cluster-binding residues include H50, C54, C58, and C93. D223 contacts Mo-bis(molybdopterin guanine dinucleotide).

The protein belongs to the prokaryotic molybdopterin-containing oxidoreductase family. Dimer of heterotrimers each composed of an alpha, a beta and a gamma chain. Alpha and beta are catalytic chains; gamma chains are involved in binding the enzyme complex to the cytoplasmic membrane. Interacts with the NarJ chaperone. The cofactor is [4Fe-4S] cluster. Mo-bis(molybdopterin guanine dinucleotide) is required as a cofactor.

Its subcellular location is the cell membrane. It catalyses the reaction nitrate + a quinol = a quinone + nitrite + H2O. The nitrate reductase enzyme complex allows E.coli to use nitrate as an electron acceptor during anaerobic growth. The alpha chain is the actual site of nitrate reduction. The protein is Respiratory nitrate reductase 1 alpha chain (narG) of Escherichia coli (strain K12).